Consider the following 200-residue polypeptide: Small ribosomal subunit protein uS4 (200 aa).

Residues 22 to 42 are disordered; that stretch reads TGKELQKRPYPPGQHGPGQRR. One can recognise an S4 RNA-binding domain in the interval 92 to 152; it reads SRLDNLVYRL…EKSRNLQVIK (61 aa).

It belongs to the universal ribosomal protein uS4 family. Part of the 30S ribosomal subunit. Contacts protein S5. The interaction surface between S4 and S5 is involved in control of translational fidelity.

In terms of biological role, one of the primary rRNA binding proteins, it binds directly to 16S rRNA where it nucleates assembly of the body of the 30S subunit. With S5 and S12 plays an important role in translational accuracy. The sequence is that of Small ribosomal subunit protein uS4 (rpsD) from Geobacillus stearothermophilus (Bacillus stearothermophilus).